An 89-amino-acid polypeptide reads, in one-letter code: Small ribosomal subunit protein uS17 (89 aa).

It belongs to the universal ribosomal protein uS17 family. As to quaternary structure, part of the 30S ribosomal subunit.

Functionally, one of the primary rRNA binding proteins, it binds specifically to the 5'-end of 16S ribosomal RNA. This Acidovorax ebreus (strain TPSY) (Diaphorobacter sp. (strain TPSY)) protein is Small ribosomal subunit protein uS17.